The chain runs to 1113 residues: Translation initiation factor IF-2 (1113 aa).

Composition is skewed to polar residues over residues 56–72, 129–139, 162–187, and 194–205; these read QSNQ…SSKE, KANTSNQSKGV, LENN…TQLV, and TKNNEPPQQKTS. Disordered regions lie at residues 56-446 and 470-504; these read QSNQ…IGEN and LARP…RQRR. Positions 248–265 are enriched in low complexity; sequence PVQPRTQNNQNRQRIPNK. A compositionally biased stretch (basic and acidic residues) spans 415-429; it reads RRSDWDDAAKLEALR. 2 stretches are compositionally biased toward basic residues: residues 474-483 and 490-504; these read AKPKSTKKSN and TRKR…RQRR. The region spanning 605–777 is the tr-type G domain; it reads RRPPVVTVMG…VLLVTEVEDL (173 aa). Residues 614–621 are G1; it reads GHVDHGKT. 614–621 is a GTP binding site; it reads GHVDHGKT. The tract at residues 639–643 is G2; that stretch reads GITQH. The segment at 664 to 667 is G3; it reads DTPG. GTP is bound by residues 664 to 668 and 718 to 721; these read DTPGH and NKID. Residues 718–721 are G4; sequence NKID. A G5 region spans residues 754–756; the sequence is SAI.

This sequence belongs to the TRAFAC class translation factor GTPase superfamily. Classic translation factor GTPase family. IF-2 subfamily.

Its subcellular location is the cytoplasm. In terms of biological role, one of the essential components for the initiation of protein synthesis. Protects formylmethionyl-tRNA from spontaneous hydrolysis and promotes its binding to the 30S ribosomal subunits. Also involved in the hydrolysis of GTP during the formation of the 70S ribosomal complex. The sequence is that of Translation initiation factor IF-2 from Prochlorococcus marinus (strain MIT 9211).